Here is a 239-residue protein sequence, read N- to C-terminus: Protein GrpE (239 aa).

2 disordered regions span residues 1-56 and 208-239; these read MIEN…KNTI and SMGP…SEDV. Residues 40–53 are compositionally biased toward basic and acidic residues; sequence TSQKKEAINTEELK. Acidic residues predominate over residues 224 to 239; it reads TVEEDVNSEVNTSEDV.

It belongs to the GrpE family. In terms of assembly, homodimer.

The protein localises to the cytoplasm. Its function is as follows. Participates actively in the response to hyperosmotic and heat shock by preventing the aggregation of stress-denatured proteins, in association with DnaK and GrpE. It is the nucleotide exchange factor for DnaK and may function as a thermosensor. Unfolded proteins bind initially to DnaJ; upon interaction with the DnaJ-bound protein, DnaK hydrolyzes its bound ATP, resulting in the formation of a stable complex. GrpE releases ADP from DnaK; ATP binding to DnaK triggers the release of the substrate protein, thus completing the reaction cycle. Several rounds of ATP-dependent interactions between DnaJ, DnaK and GrpE are required for fully efficient folding. The polypeptide is Protein GrpE (Prochlorococcus marinus (strain MIT 9215)).